Consider the following 790-residue polypeptide: MQPNPDLVRAIANRYAANLRLCLPLRRTSLQLARAVHGNIITFGFQPRAHILNRLIDVYCKSSELNYARQLFDEISEPDKIARTTMVSGYCASGDITLARGVFEKAPVCMRDTVMYNAMITGFSHNNDGYSAINLFCKMKHEGFKPDNFTFASVLAGLALVADDEKQCVQFHAAALKSGAGYITSVSNALVSVYSKCASSPSLLHSARKVFDEILEKDERSWTTMMTGYVKNGYFDLGEELLEGMDDNMKLVAYNAMISGYVNRGFYQEALEMVRRMVSSGIELDEFTYPSVIRACATAGLLQLGKQVHAYVLRREDFSFHFDNSLVSLYYKCGKFDEARAIFEKMPAKDLVSWNALLSGYVSSGHIGEAKLIFKEMKEKNILSWMIMISGLAENGFGEEGLKLFSCMKREGFEPCDYAFSGAIKSCAVLGAYCNGQQYHAQLLKIGFDSSLSAGNALITMYAKCGVVEEARQVFRTMPCLDSVSWNALIAALGQHGHGAEAVDVYEEMLKKGIRPDRITLLTVLTACSHAGLVDQGRKYFDSMETVYRIPPGADHYARLIDLLCRSGKFSDAESVIESLPFKPTAEIWEALLSGCRVHGNMELGIIAADKLFGLIPEHDGTYMLLSNMHAATGQWEEVARVRKLMRDRGVKKEVACSWIEMETQVHTFLVDDTSHPEAEAVYIYLQDLGKEMRRLGYVPDTSFVLHDVESDGHKEDMLTTHSEKIAVAFGLMKLPPGTTIRIFKNLRTCGDCHNFFRFLSWVVQRDIILRDRKRFHHFRNGECSCGNFW.

PPR repeat units lie at residues 48-82, 84-109, 112-146, 147-182, 183-217, 218-248, 250-284, 285-315, 319-349, 350-384, 385-415, 416-450, 451-481, 482-516, 517-551, and 553-583; these read RAHILNRLIDVYCKSSELNYARQLFDEISEPDKIA, TTMVSGYCASGDITLARGVFEKAPVC, DTVMYNAMITGFSHNNDGYSAINLFCKMKHEGFKP, DNFTFASVLAGLALVADDEKQCVQFHAAALKSGAGY, ITSVSNALVSVYSKCASSPSLLHSARKVFDEILEK, DERSWTTMMTGYVKNGYFDLGEELLEGMDDN, KLVAYNAMISGYVNRGFYQEALEMVRRMVSSGIEL, DEFTYPSVIRACATAGLLQLGKQVHAYVLRR, SFHFDNSLVSLYYKCGKFDEARAIFEKMPAK, DLVSWNALLSGYVSSGHIGEAKLIFKEMKEKNILS, WMIMISGLAENGFGEEGLKLFSCMKREGFEP, CDYAFSGAIKSCAVLGAYCNGQQYHAQLLKIGFDS, SLSAGNALITMYAKCGVVEEARQVFRTMPCL, DSVSWNALIAALGQHGHGAEAVDVYEEMLKKGIRP, DRITLLTVLTACSHAGLVDQGRKYFDSMETVYRIP, and GADHYARLIDLLCRSGKFSDAESVIESLPFK. A type E motif region spans residues 588–663; the sequence is IWEALLSGCR…EVACSWIEME (76 aa). Residues 664–694 form a type E(+) motif region; the sequence is TQVHTFLVDDTSHPEAEAVYIYLQDLGKEMR. A type DYW motif region spans residues 695–790; sequence RLGYVPDTSF…NGECSCGNFW (96 aa).

The protein belongs to the PPR family. PCMP-H subfamily.

The sequence is that of Pentatricopeptide repeat-containing protein At1g25360 (PCMP-H74) from Arabidopsis thaliana (Mouse-ear cress).